The sequence spans 456 residues: MSSGWSQNDHRSYSNPPPVSGKRPRNDSGNKVTVVLGAQWGDEGKGKVVDLLATESDIVGRCQGGNNAGHTVVVEEKEYDFHLLPSGIINTKCTSFIGNGVVIHLPGLFEEIDKNEKKGLKGWEKRLVISDRAHIVFDFHQAVDGLQETQRQAQEGKNIGTTKKGIGPTYACKASRTGLRICDLMADFNEFSTRVKNLVQQYQSMYPTLKVDVESELKKLKEYAERIRPLVRDGVYFMYDAIHGPQKKILVEGANAALLDIDFGTYPFVTSSNCTVGGVCTGLGIPPANIGDVYGVSKAYTTRVGIGAFPTEQLNAVGELLQTRGHEVGVTTGRKRRCGWLDLVILKYAHMINGFTAIALTKLDILDVLDEIKVGVAYKINGKRIPHFPANLEVLQKVEVEYETFPGWKSDTSAARKWGDLPAKAQNYIRFVENHIGVPIKWVGVGKSRECMIQMF.

The tract at residues 1–30 (MSSGWSQNDHRSYSNPPPVSGKRPRNDSGN) is disordered. Residues 41-47 (GDEGKGK) and 69-71 (GHT) each bind GTP. Residue Asp42 is the Proton acceptor of the active site. Mg(2+)-binding residues include Asp42 and Gly69. Asp42 contacts substrate. IMP contacts are provided by residues 42–45 (DEGK) and 67–70 (NAGH). The active-site Proton donor is His70. Phosphoserine is present on Ser130. IMP-binding residues include Thr162, Arg176, Asn255, Thr270, and Arg334. Residue 330 to 336 (VTTGRKR) participates in substrate binding. GTP-binding positions include Arg336, 362–364 (KLD), and 444–447 (GVGK).

The protein belongs to the adenylosuccinate synthetase family. Homodimer. Mg(2+) serves as cofactor.

It localises to the cytoplasm. It carries out the reaction IMP + L-aspartate + GTP = N(6)-(1,2-dicarboxyethyl)-AMP + GDP + phosphate + 2 H(+). Its pathway is purine metabolism; AMP biosynthesis via de novo pathway; AMP from IMP: step 1/2. Its function is as follows. Component of the purine nucleotide cycle (PNC), which interconverts IMP and AMP to regulate the nucleotide levels in various tissues, and which contributes to glycolysis and ammoniagenesis. Catalyzes the first committed step in the biosynthesis of AMP from IMP. The chain is Adenylosuccinate synthetase isozyme 1 (adss1) from Danio rerio (Zebrafish).